The primary structure comprises 107 residues: Flagellar hook-basal body complex protein FliE (107 aa).

This sequence belongs to the FliE family.

The protein resides in the bacterial flagellum basal body. In Mesorhizobium japonicum (strain LMG 29417 / CECT 9101 / MAFF 303099) (Mesorhizobium loti (strain MAFF 303099)), this protein is Flagellar hook-basal body complex protein FliE.